Here is a 516-residue protein sequence, read N- to C-terminus: Potassium voltage-gated channel subfamily A member 10 (516 aa).

A helical membrane pass occupies residues 223-244 (VALVSVLVIVISIIIFCMETLP). Residue N261 is glycosylated (N-linked (GlcNAc...) asparagine). The chain crosses the membrane as a helical span at residues 276 to 296 (FFVIETACIIWFSFELFVRFI). A helical transmembrane segment spans residues 308–328 (IMNIIDIVSIIPYFVTLTTEL). N339 is a glycosylation site (N-linked (GlcNAc...) asparagine). The chain crosses the membrane as a helical; Voltage-sensor span at residues 344–363 (ILRIIRLVRVFRIFKLSRHS). Residues 380-400 (LGLLIFFLFIGVILFSSAVYF) traverse the membrane as a helical segment. A Selectivity filter motif is present at residues 426–431 (TVGYGD). The chain crosses the membrane as a helical span at residues 441–461 (IVGTLCAIAGVLTIALPVPVI). N503 carries an N-linked (GlcNAc...) asparagine glycan.

This sequence belongs to the potassium channel family. A (Shaker) (TC 1.A.1.2) subfamily. Kv1.8/KCNA10 sub-subfamily. Homotetramer. In terms of tissue distribution, detected in brain, cochlear sensory epithelium, cochlear ganglion, tegumentum vasculosum. Detected at low levels in cochlear lagena.

The protein localises to the membrane. It carries out the reaction K(+)(in) = K(+)(out). Its activity is regulated as follows. The channel activity is up-regulated by cAMP. Functionally, voltage-gated potassium ion channel that mediates K(+) permeability of excitable membranes. When opened in response to the voltage difference across the membrane, KCNA10 channel selectively allows the flow of potassium ions across the membrane down their electrochemical gradient. In Gallus gallus (Chicken), this protein is Potassium voltage-gated channel subfamily A member 10 (KCNA10).